The sequence spans 398 residues: Phosphoglycerate kinase (398 aa).

Substrate is bound by residues 23–25 (DFN), Arg38, 61–64 (HMGK), Arg122, and Arg155. Residues Lys206, Gly297, Glu328, and 354–357 (GGDS) contribute to the ATP site.

Belongs to the phosphoglycerate kinase family. In terms of assembly, monomer.

The protein localises to the cytoplasm. It catalyses the reaction (2R)-3-phosphoglycerate + ATP = (2R)-3-phospho-glyceroyl phosphate + ADP. It participates in carbohydrate degradation; glycolysis; pyruvate from D-glyceraldehyde 3-phosphate: step 2/5. The polypeptide is Phosphoglycerate kinase (Clostridium botulinum (strain 657 / Type Ba4)).